Here is a 248-residue protein sequence, read N- to C-terminus: NAD(P)H-quinone oxidoreductase subunit K 1 (248 aa).

Positions 1–2 (MS) are excised as a propeptide. C62, C63, C127, and C158 together coordinate [4Fe-4S] cluster. The disordered stretch occupies residues 228–248 (MGMPVPPALTTSQQKEQLNRG). Residues 236–248 (LTTSQQKEQLNRG) are compositionally biased toward polar residues.

It belongs to the complex I 20 kDa subunit family. In terms of assembly, NDH-1 can be composed of about 15 different subunits; different subcomplexes with different compositions have been identified which probably have different functions. It depends on [4Fe-4S] cluster as a cofactor.

The protein resides in the cellular thylakoid membrane. It catalyses the reaction a plastoquinone + NADH + (n+1) H(+)(in) = a plastoquinol + NAD(+) + n H(+)(out). It carries out the reaction a plastoquinone + NADPH + (n+1) H(+)(in) = a plastoquinol + NADP(+) + n H(+)(out). Its function is as follows. NDH-1 shuttles electrons from an unknown electron donor, via FMN and iron-sulfur (Fe-S) centers, to quinones in the respiratory and/or the photosynthetic chain. The immediate electron acceptor for the enzyme in this species is believed to be plastoquinone. Couples the redox reaction to proton translocation, and thus conserves the redox energy in a proton gradient. Cyanobacterial NDH-1 also plays a role in inorganic carbon-concentration. This chain is NAD(P)H-quinone oxidoreductase subunit K 1, found in Synechocystis sp. (strain ATCC 27184 / PCC 6803 / Kazusa).